A 598-amino-acid polypeptide reads, in one-letter code: Probable translation initiation factor IF-2 (598 aa).

Residues 8–226 (IRQPIISVLG…VTGLAQRFLE (219 aa)) enclose the tr-type G domain. The G1 stretch occupies residues 17 to 24 (GHVDHGKT). Residue 17 to 24 (GHVDHGKT) coordinates GTP. Residues 42–46 (GITQH) form a G2 region. The tract at residues 81–84 (DTPG) is G3. GTP contacts are provided by residues 81 to 85 (DTPGH) and 135 to 138 (NKVD). The interval 135–138 (NKVD) is G4. Residues 203–205 (SGV) form a G5 region.

It belongs to the TRAFAC class translation factor GTPase superfamily. Classic translation factor GTPase family. IF-2 subfamily.

Its function is as follows. Function in general translation initiation by promoting the binding of the formylmethionine-tRNA to ribosomes. Seems to function along with eIF-2. In Methanopyrus kandleri (strain AV19 / DSM 6324 / JCM 9639 / NBRC 100938), this protein is Probable translation initiation factor IF-2.